A 1698-amino-acid polypeptide reads, in one-letter code: Protein 4.1 homolog (1698 aa).

The disordered stretch occupies residues 1–31 (MPAEIKPSAPAEPETPTKSKPKSSSSSHGKP). Over residues 12–27 (EPETPTKSKPKSSSSS) the composition is skewed to low complexity. In terms of domain architecture, FERM spans 32–314 (ALARVTLLDG…EHHTFFRLMT (283 aa)). Residues 317 to 434 (PVSKSKMFPV…KEEKERKERE (118 aa)) form a hydrophilic region. Disordered regions lie at residues 335-361 (GRTQ…SGAR) and 374-710 (EKEK…SDPT). Positions 374 to 448 (EKEKVARKSS…EEKKKAEKAA (75 aa)) are enriched in basic and acidic residues. Low complexity predominate over residues 449–461 (KAALAAGAAAGAA). Phosphoserine is present on residues Ser-471, Ser-474, and Ser-478. Residues 499–514 (KDGKDKSGKDKDKEVG) show a composition bias toward basic and acidic residues. The segment covering 562 to 571 (DGNTSPTRKS) has biased composition (polar residues). Residue Ser-566 is modified to Phosphoserine. The span at 579–589 (YDQDPNSRKSG) shows a compositional bias: basic and acidic residues. A compositionally biased stretch (polar residues) spans 594–603 (EQLSPTSQQK). Basic and acidic residues predominate over residues 618 to 627 (ALKETAEKLK). Phosphoserine is present on residues Ser-659 and Ser-687. Over residues 684–696 (RSYSPTKGPQGYS) the composition is skewed to polar residues. Position 689 is a phosphothreonine (Thr-689). A phosphoserine mark is found at Ser-697, Ser-1398, Ser-1401, and Ser-1402. A C-terminal (CTD) region spans residues 1286-1698 (GEIVQVDPND…EKIEIQQQTQ (413 aa)). Residue Thr-1407 is modified to Phosphothreonine. The span at 1509 to 1532 (LGKNAKTEQLEEKTVATTRTHDPN) shows a compositional bias: basic and acidic residues. A disordered region spans residues 1509 to 1599 (LGKNAKTEQL…SPLFTTSATT (91 aa)). Polar residues predominate over residues 1533 to 1554 (KQQQRVVTQEVKTTATVTSGDQ). Residues 1561–1571 (VSSTSSGDSGT) show a composition bias toward low complexity. The span at 1584–1599 (RTDNQKSPLFTTSATT) shows a compositional bias: polar residues. Ser-1590 carries the post-translational modification Phosphoserine.

At onset of germ band retraction, expression is seen in epidermis, hindgut and foregut. During retraction, expression extends to tracheal branches and salivary glands.

It localises to the cell junction. It is found in the septate junction. In terms of biological role, an integral component of the septate junction. May play a role in cell-cell interactions that are necessary for proper development. Vital for embryonic development. The polypeptide is Protein 4.1 homolog (cora) (Drosophila melanogaster (Fruit fly)).